Here is a 243-residue protein sequence, read N- to C-terminus: MGQKINPIGFRLGINRTWDSRWFADNAEYGQLLHEDLKMRKFVMSELKQAGISKVVIERPHKKCRVTIHSARPGLIIGRKGADIDKLRKKLSEMTNSETHLNIVEVRKPEVDATLVAQSIAQQLERRVAFRRAMKRAVQSAMRLGAEGIKITCAGRLGGAEIARTEWYREGRVPLHTLRADIDYGTAEAETAFGICGIKVWIFKGEILEHDPMASERRAMEGDAQGPASRDRDRDRDRRRDNA.

Residues 39 to 107 (MRKFVMSELK…ETHLNIVEVR (69 aa)) enclose the KH type-2 domain. The tract at residues 214 to 243 (ASERRAMEGDAQGPASRDRDRDRDRRRDNA) is disordered. The segment covering 229–243 (SRDRDRDRDRRRDNA) has biased composition (basic and acidic residues).

This sequence belongs to the universal ribosomal protein uS3 family. As to quaternary structure, part of the 30S ribosomal subunit. Forms a tight complex with proteins S10 and S14.

Its function is as follows. Binds the lower part of the 30S subunit head. Binds mRNA in the 70S ribosome, positioning it for translation. The polypeptide is Small ribosomal subunit protein uS3 (Rhizobium johnstonii (strain DSM 114642 / LMG 32736 / 3841) (Rhizobium leguminosarum bv. viciae)).